The chain runs to 313 residues: Glyoxylate/hydroxypyruvate reductase A (313 aa).

Residue arginine 228 is part of the active site. Histidine 276 (proton donor) is an active-site residue.

It belongs to the D-isomer specific 2-hydroxyacid dehydrogenase family. GhrA subfamily.

It localises to the cytoplasm. The enzyme catalyses glycolate + NADP(+) = glyoxylate + NADPH + H(+). The catalysed reaction is (R)-glycerate + NAD(+) = 3-hydroxypyruvate + NADH + H(+). It carries out the reaction (R)-glycerate + NADP(+) = 3-hydroxypyruvate + NADPH + H(+). Functionally, catalyzes the NADPH-dependent reduction of glyoxylate and hydroxypyruvate into glycolate and glycerate, respectively. This chain is Glyoxylate/hydroxypyruvate reductase A, found in Serratia proteamaculans (strain 568).